A 171-amino-acid chain; its full sequence is Lipoprotein signal peptidase (171 aa).

3 helical membrane passes run Ser-8–Val-28, Trp-64–Leu-84, and Ala-99–Val-119. Residues Asp-120 and Asp-138 contribute to the active site. Residues Val-133–Phe-153 form a helical membrane-spanning segment.

This sequence belongs to the peptidase A8 family.

It is found in the cell inner membrane. The catalysed reaction is Release of signal peptides from bacterial membrane prolipoproteins. Hydrolyzes -Xaa-Yaa-Zaa-|-(S,diacylglyceryl)Cys-, in which Xaa is hydrophobic (preferably Leu), and Yaa (Ala or Ser) and Zaa (Gly or Ala) have small, neutral side chains.. Its pathway is protein modification; lipoprotein biosynthesis (signal peptide cleavage). Functionally, this protein specifically catalyzes the removal of signal peptides from prolipoproteins. In Haemophilus influenzae (strain ATCC 51907 / DSM 11121 / KW20 / Rd), this protein is Lipoprotein signal peptidase.